The primary structure comprises 1713 residues: uncharacterized protein (1713 aa).

The span at 1-12 (MNENEFSTNSLI) shows a compositional bias: polar residues. 7 disordered regions span residues 1-35 (MNENEFSTNSLINQQGTNNNNNNNTNNNITNINFG), 79-200 (QQLN…KLSN), 226-290 (GNNN…QPLS), 309-557 (QYLS…PMSH), 713-734 (SNDQNDRVPIHQLGGATGKKDR), 808-952 (SPPM…SITT), and 1143-1190 (HHHH…SISR). Low complexity-rich tracts occupy residues 13-35 (NQQGTNNNNNNNTNNNITNINFG), 79-109 (QQLNTPPTTPNTSTPSTPTSSRNNNNNNNNN), 126-170 (NNSG…NSGN), 177-200 (NMSDITNDNSNSSSNAGSNSKLSN), and 226-264 (GNNNYHNGNNENGNNTFHVGNNLNNNNNNNNIGSSGGNN). Basic residues predominate over residues 265-276 (SHHHHNHSHHNS). Composition is skewed to low complexity over residues 317–470 (NNIN…SPAS) and 478–489 (SNNFGGNHNNYN). The segment covering 490–504 (HAHHSHHNNHAHHNT) has biased composition (basic residues). A compositionally biased stretch (low complexity) spans 505 to 553 (HNYNNNNNNNNNNNNNNNNNNNNSNNSNNNSNTNNNGNNGNNSNNNNNH). A DNA-binding region (NDT80) is located at residues 544 to 825 (GNNSNNNNNH…QNPGRFLNHD (282 aa)). Basic and acidic residues predominate over residues 822–832 (LNHDKSLKKDP). The segment covering 838–874 (GGKGGGGSGSGGMGGGMGGGMGNNGSSGSSSNGGYGN) has biased composition (gly residues). 2 stretches are compositionally biased toward low complexity: residues 898 to 946 (SPTT…PTLT) and 1148 to 1189 (QQQQ…SSIS). Residues 1240–1355 (SDQRIKSNIR…RSLKKEKDHI (116 aa)) form the Peptidase S74 domain. Helical transmembrane passes span 1416 to 1436 (TMFVFGFFIPICWIIGSFYLF), 1447 to 1467 (LMNFVATIIFILALSLMTFYV), and 1473 to 1493 (LIIAPALIVMGFVVCILVGFF). The span at 1596–1605 (NSNNNINNNN) shows a compositional bias: low complexity. Disordered stretches follow at residues 1596–1634 (NSNNNINNNNQERLSDSSKSSFIDDFKKSSSNNHKDFHE) and 1646–1665 (IKGKKQSSSSAKTRSLSSSN). The segment covering 1617–1634 (FIDDFKKSSSNNHKDFHE) has biased composition (basic and acidic residues).

Its subcellular location is the membrane. This is an uncharacterized protein from Dictyostelium discoideum (Social amoeba).